The sequence spans 561 residues: SH3 domain-binding protein 2 (561 aa).

One can recognise a PH domain in the interval 26–130; that stretch reads GVAKAGYLHK…WMALLRREIG (105 aa). 2 disordered regions span residues 160-316 and 333-451; these read VDIS…GACS and KLKS…YEKV. Positions 170–188 are enriched in acidic residues; it reads DNEDYEHDDEDDSYLEPDS. Phosphotyrosine; by SYK is present on residues Tyr-174 and Tyr-183. An SH3-binding motif is present at residues 201–210; the sequence is PPAYPPPPVP. 2 stretches are compositionally biased toward pro residues: residues 202–213 and 233–242; these read PAYPPPPVPTPR and PLLPPPPPKH. A compositionally biased stretch (basic and acidic residues) spans 252 to 266; the sequence is EDSKRDPLCPRRAEP. Residue Ser-278 is modified to Phosphoserine. Positions 342–354 are enriched in pro residues; the sequence is RGPPTSEPPPVPA. Phosphoserine is present on residues Ser-416 and Ser-427. Residue Tyr-448 is modified to Phosphotyrosine; by SYK. An SH2 domain is found at 457 to 555; it reads VFVNTTESCE…HQSLLLRHPY (99 aa).

Phosphorylated. Phosphorylation at Tyr-448 may stimulate the activity of the LYN kinase. As to expression, expressed in a variety of tissues including lung, liver, skeletal muscle, kidney and pancreas.

Functionally, binds differentially to the SH3 domains of certain proteins of signal transduction pathways. Binds to phosphatidylinositols; linking the hemopoietic tyrosine kinase fes to the cytoplasmic membrane in a phosphorylation dependent mechanism. In Homo sapiens (Human), this protein is SH3 domain-binding protein 2 (SH3BP2).